Reading from the N-terminus, the 245-residue chain is NAD-dependent protein deacylase (245 aa).

The 245-residue stretch at 1-245 (MEAVWESARI…RLSRAMGIDI (245 aa)) folds into the Deacetylase sirtuin-type domain. Position 22-41 (22-41 (GAGISAESGIPTFRGKDGLW)) interacts with NAD(+). 2 residues coordinate substrate: Y66 and R69. 100–103 (QNVD) contributes to the NAD(+) binding site. The Proton acceptor role is filled by H118. The Zn(2+) site is built by C126, C129, C146, and C149. NAD(+)-binding positions include 186 to 188 (GTS), 212 to 214 (NPE), and M241.

The protein belongs to the sirtuin family. Class III subfamily. Requires Zn(2+) as cofactor.

It is found in the cytoplasm. The enzyme catalyses N(6)-acetyl-L-lysyl-[protein] + NAD(+) + H2O = 2''-O-acetyl-ADP-D-ribose + nicotinamide + L-lysyl-[protein]. It carries out the reaction N(6)-succinyl-L-lysyl-[protein] + NAD(+) + H2O = 2''-O-succinyl-ADP-D-ribose + nicotinamide + L-lysyl-[protein]. Its function is as follows. NAD-dependent lysine deacetylase and desuccinylase that specifically removes acetyl and succinyl groups on target proteins. Modulates the activities of several proteins which are inactive in their acylated form. Deacetylates the N-terminal lysine residue of Alba, the major archaeal chromatin protein and that, in turn, increases Alba's DNA binding affinity, thereby repressing transcription. The polypeptide is NAD-dependent protein deacylase (Aeropyrum pernix (strain ATCC 700893 / DSM 11879 / JCM 9820 / NBRC 100138 / K1)).